We begin with the raw amino-acid sequence, 147 residues long: Cyanate hydratase (147 aa).

Residues Arg88, Glu91, and Ser114 contribute to the active site.

This sequence belongs to the cyanase family.

It catalyses the reaction cyanate + hydrogencarbonate + 3 H(+) = NH4(+) + 2 CO2. Catalyzes the reaction of cyanate with bicarbonate to produce ammonia and carbon dioxide. The protein is Cyanate hydratase of Methylibium petroleiphilum (strain ATCC BAA-1232 / LMG 22953 / PM1).